The following is a 281-amino-acid chain: Pantothenate synthetase (281 aa).

An ATP-binding site is contributed by 30 to 37 (MGYLHEGH). His37 functions as the Proton donor in the catalytic mechanism. Gln61 lines the (R)-pantoate pocket. Beta-alanine is bound at residue Gln61. An ATP-binding site is contributed by 147–150 (GQKD). Gln153 serves as a coordination point for (R)-pantoate. Residues Val176 and 184–187 (MSSR) each bind ATP.

Belongs to the pantothenate synthetase family. In terms of assembly, homodimer.

It localises to the cytoplasm. The enzyme catalyses (R)-pantoate + beta-alanine + ATP = (R)-pantothenate + AMP + diphosphate + H(+). Its pathway is cofactor biosynthesis; (R)-pantothenate biosynthesis; (R)-pantothenate from (R)-pantoate and beta-alanine: step 1/1. In terms of biological role, catalyzes the condensation of pantoate with beta-alanine in an ATP-dependent reaction via a pantoyl-adenylate intermediate. In Heliobacterium modesticaldum (strain ATCC 51547 / Ice1), this protein is Pantothenate synthetase.